Consider the following 77-residue polypeptide: Acyl carrier protein (77 aa).

The Carrier domain occupies 1–76 (MENFDKVKDI…DAVKFINSIE (76 aa)). Residue S36 is modified to O-(pantetheine 4'-phosphoryl)serine.

It belongs to the acyl carrier protein (ACP) family. Post-translationally, 4'-phosphopantetheine is transferred from CoA to a specific serine of apo-ACP by AcpS. This modification is essential for activity because fatty acids are bound in thioester linkage to the sulfhydryl of the prosthetic group.

It is found in the cytoplasm. The protein operates within lipid metabolism; fatty acid biosynthesis. In terms of biological role, carrier of the growing fatty acid chain in fatty acid biosynthesis. The protein is Acyl carrier protein of Staphylococcus saprophyticus subsp. saprophyticus (strain ATCC 15305 / DSM 20229 / NCIMB 8711 / NCTC 7292 / S-41).